The following is a 600-amino-acid chain: Proline--tRNA ligase (600 aa).

Belongs to the class-II aminoacyl-tRNA synthetase family. ProS type 1 subfamily. In terms of assembly, homodimer.

The protein localises to the cytoplasm. It carries out the reaction tRNA(Pro) + L-proline + ATP = L-prolyl-tRNA(Pro) + AMP + diphosphate. Catalyzes the attachment of proline to tRNA(Pro) in a two-step reaction: proline is first activated by ATP to form Pro-AMP and then transferred to the acceptor end of tRNA(Pro). As ProRS can inadvertently accommodate and process non-cognate amino acids such as alanine and cysteine, to avoid such errors it has two additional distinct editing activities against alanine. One activity is designated as 'pretransfer' editing and involves the tRNA(Pro)-independent hydrolysis of activated Ala-AMP. The other activity is designated 'posttransfer' editing and involves deacylation of mischarged Ala-tRNA(Pro). The misacylated Cys-tRNA(Pro) is not edited by ProRS. The sequence is that of Proline--tRNA ligase from Gloeothece citriformis (strain PCC 7424) (Cyanothece sp. (strain PCC 7424)).